The sequence spans 159 residues: Endoribonuclease YbeY (159 aa).

Residues H122, H126, and H132 each coordinate Zn(2+).

This sequence belongs to the endoribonuclease YbeY family. It depends on Zn(2+) as a cofactor.

The protein localises to the cytoplasm. Single strand-specific metallo-endoribonuclease involved in late-stage 70S ribosome quality control and in maturation of the 3' terminus of the 16S rRNA. This is Endoribonuclease YbeY from Roseiflexus castenholzii (strain DSM 13941 / HLO8).